The following is a 173-amino-acid chain: Transcription factor E (173 aa).

Positions 3–88 constitute an HTH TFE/IIEalpha-type domain; sequence NNPIIQQVLL…TWRATFTKLP (86 aa).

Belongs to the TFE family. Monomer. Interaction with RNA polymerase subunits RpoF and RpoE is necessary for Tfe stimulatory transcription activity. Able to interact with Tbp and RNA polymerase in the absence of DNA promoter. Interacts both with the preinitiation and elongation complexes.

In terms of biological role, transcription factor that plays a role in the activation of archaeal genes transcribed by RNA polymerase. Facilitates transcription initiation by enhancing TATA-box recognition by TATA-box-binding protein (Tbp), and transcription factor B (Tfb) and RNA polymerase recruitment. Not absolutely required for transcription in vitro, but particularly important in cases where Tbp or Tfb function is not optimal. It dynamically alters the nucleic acid-binding properties of RNA polymerases by stabilizing the initiation complex and destabilizing elongation complexes. Seems to translocate with the RNA polymerase following initiation and acts by binding to the non template strand of the transcription bubble in elongation complexes. In Methanococcus aeolicus (strain ATCC BAA-1280 / DSM 17508 / OCM 812 / Nankai-3), this protein is Transcription factor E.